Here is a 390-residue protein sequence, read N- to C-terminus: S-adenosylmethionine synthase 2 (390 aa).

E9 is a binding site for Mg(2+). H15 is a binding site for ATP. Position 43 (E43) interacts with K(+). 2 residues coordinate L-methionine: E56 and Q99. Residues 167–169 (DGK), 235–238 (SGRF), D246, 252–253 (RK), A269, K273, and K277 contribute to the ATP site. L-methionine is bound at residue D246. Residue K277 coordinates L-methionine.

This sequence belongs to the AdoMet synthase family. Homotetramer. Mn(2+) is required as a cofactor. It depends on Mg(2+) as a cofactor. Requires Co(2+) as cofactor. The cofactor is K(+).

It localises to the cytoplasm. It catalyses the reaction L-methionine + ATP + H2O = S-adenosyl-L-methionine + phosphate + diphosphate. Its pathway is amino-acid biosynthesis; S-adenosyl-L-methionine biosynthesis; S-adenosyl-L-methionine from L-methionine: step 1/1. In terms of biological role, catalyzes the formation of S-adenosylmethionine from methionine and ATP. The reaction comprises two steps that are both catalyzed by the same enzyme: formation of S-adenosylmethionine (AdoMet) and triphosphate, and subsequent hydrolysis of the triphosphate. This chain is S-adenosylmethionine synthase 2 (SAMS2), found in Nicotiana tabacum (Common tobacco).